The primary structure comprises 211 residues: Phosphoserine phosphatase (211 aa).

Catalysis depends on D11, which acts as the Nucleophile. Mg(2+) is bound by residues D11 and D13. D13 acts as the Proton donor in catalysis. Residues E20, R56, 99 to 100 (SG), and K144 each bind substrate. D167 lines the Mg(2+) pocket. Residue N170 participates in substrate binding.

Belongs to the HAD-like hydrolase superfamily. SerB family. It depends on Mg(2+) as a cofactor.

It carries out the reaction O-phospho-L-serine + H2O = L-serine + phosphate. The catalysed reaction is O-phospho-D-serine + H2O = D-serine + phosphate. It functions in the pathway amino-acid biosynthesis; L-serine biosynthesis; L-serine from 3-phospho-D-glycerate: step 3/3. The chain is Phosphoserine phosphatase from Methanocaldococcus jannaschii (strain ATCC 43067 / DSM 2661 / JAL-1 / JCM 10045 / NBRC 100440) (Methanococcus jannaschii).